An 891-amino-acid chain; its full sequence is Alanine--tRNA ligase (891 aa).

Zn(2+) contacts are provided by H564, H568, C678, and H682.

Belongs to the class-II aminoacyl-tRNA synthetase family. Requires Zn(2+) as cofactor.

The protein resides in the cytoplasm. It catalyses the reaction tRNA(Ala) + L-alanine + ATP = L-alanyl-tRNA(Ala) + AMP + diphosphate. Catalyzes the attachment of alanine to tRNA(Ala) in a two-step reaction: alanine is first activated by ATP to form Ala-AMP and then transferred to the acceptor end of tRNA(Ala). Also edits incorrectly charged Ser-tRNA(Ala) and Gly-tRNA(Ala) via its editing domain. The sequence is that of Alanine--tRNA ligase from Nitrobacter hamburgensis (strain DSM 10229 / NCIMB 13809 / X14).